We begin with the raw amino-acid sequence, 146 residues long: 3-dehydroquinate dehydratase (146 aa).

Tyrosine 23 acts as the Proton acceptor in catalysis. Substrate-binding residues include asparagine 74, histidine 80, and aspartate 87. The active-site Proton donor is the histidine 100. Residues isoleucine 101–serine 102 and arginine 111 each bind substrate.

This sequence belongs to the type-II 3-dehydroquinase family. In terms of assembly, homododecamer.

The enzyme catalyses 3-dehydroquinate = 3-dehydroshikimate + H2O. The protein operates within metabolic intermediate biosynthesis; chorismate biosynthesis; chorismate from D-erythrose 4-phosphate and phosphoenolpyruvate: step 3/7. Functionally, catalyzes a trans-dehydration via an enolate intermediate. The protein is 3-dehydroquinate dehydratase of Bacillus cytotoxicus (strain DSM 22905 / CIP 110041 / 391-98 / NVH 391-98).